We begin with the raw amino-acid sequence, 551 residues long: MAEPVRLGRKRPLPVCPNPLFVRWLTEWRDEAASRGRHTRFVFQKALRSLQRYPLPLRNGKEAKILQHFGDRLCRMLDERLKEHLASGGDHAPSSPSGKKRASKGPPAQVQGSSMPVPTQPQAGSTNAGYWPAQNSGAREILLQLYREHLNSDGHSFLTKEELLQKCAQKTPRVVPESSRPWPALRGLLHRNLVLRTHRPARYALTPEGLELAQKLAEAEGLSTLNTAFQPEEHHEESPVPEAILSEPGTTEVGVQQRPLELRPSEYRVLLCVDIGETRGAGHRPEMLRELQRLRVPHTVRKLHVGDFVWVAQETRPRDPERPGELVLDHIVERKRLDDLCSSIIDGRFREQKFRLKRCGLGHRIYLVEEHGSVQNLSLPESTLLQAVTNTQVIDGFFVKRTMDIKESAGYLALLTKGLERLYQGHTLHSRPWGTPGDAESEAKPSTNPLCSLLTFSDFNAEAVKNKAQSVREVFARQLMQVRGLSGEKAAALVDRYSTPASLLAAYDACATTKEQEMLLSTVKCGRLQRNLGPALSRTLYQLYCSHSPLT.

Disordered stretches follow at residues 85 to 131 and 231 to 255; these read LASG…AGYW and PEEH…EVGV. Phosphoserine is present on serine 95. Residues 110–131 are compositionally biased toward polar residues; sequence VQGSSMPVPTQPQAGSTNAGYW. The interval 124–243 is interaction with BLM; that stretch reads GSTNAGYWPA…HHEESPVPEA (120 aa). Residues 131-230 are winged helix domain (WHD); critical for endonuclease activity; the sequence is WPAQNSGARE…GLSTLNTAFQ (100 aa). Residues 270-372 form the ERCC4 domain; that stretch reads LLCVDIGETR…HRIYLVEEHG (103 aa). Catalysis depends on residues aspartate 274, glutamate 277, and aspartate 307. Residues aspartate 274, glutamate 277, aspartate 307, glutamate 333, and arginine 334 each contribute to the Mg(2+) site. The helix-hairpin-helix (2HhH); involved in DNA recognition and bending stretch occupies residues 471 to 545; the sequence is VREVFARQLM…LSRTLYQLYC (75 aa).

It belongs to the XPF family. As to quaternary structure, part of the heterodimeric DNA structure-specific endonuclease complex MUS81-EME1. Part of the heterodimeric DNA structure-specific endonuclease complex MUS81-EME2. Interacts with BLM; may stimulate the endonuclease activity of MUS81. Interacts with SLX4/BTBD12; this interaction is direct and links the MUS81-EME1 complex to SLX4, which may coordinate the action of the structure-specific endonuclease during DNA repair. Interacts with DCLRE1B/Apollo. Interacts with RECQL5; this interaction stimulates mitotic DNA synthesis. Interacts with CHEK2. It depends on Mg(2+) as a cofactor.

Its subcellular location is the nucleus. It is found in the nucleolus. Functionally, catalytic subunit of two functionally distinct, structure-specific, heterodimeric DNA endonucleases MUS81-EME1 and MUS81-EME2 that are involved in the maintenance of genome stability. Both endonucleases have essentially the same substrate specificity though MUS81-EME2 is more active than its MUS81-EME1 counterpart. Both cleave 3'-flaps and nicked Holliday junctions, and exhibit limited endonuclease activity with 5' flaps and nicked double-stranded DNAs. MUS81-EME2 which is active during the replication of DNA is more specifically involved in replication fork processing. Replication forks frequently encounter obstacles to their passage, including DNA base lesions, DNA interstrand cross-links, difficult-to-replicate sequences, transcription bubbles, or tightly bound proteins. One mechanism for the restart of a stalled replication fork involves nucleolytic cleavage mediated by the MUS81-EME2 endonuclease. By acting upon the stalled fork, MUS81-EME2 generates a DNA double-strand break (DSB) that can be repaired by homologous recombination, leading to the restoration of an active fork. MUS81-EME2 could also function in telomere maintenance. MUS81-EME1, on the other hand, is active later in the cell cycle and functions in the resolution of mitotic recombination intermediates including the Holliday junctions, the four-way DNA intermediates that form during homologous recombination. The protein is Structure-specific endonuclease subunit MUS81 of Rattus norvegicus (Rat).